The following is a 191-amino-acid chain: Cytochrome c biogenesis ATP-binding export protein CcmA (191 aa).

Positions 6-189 constitute an ABC transporter domain; sequence LVATDIACRR…RVRTLAIRNF (184 aa). 38-45 serves as a coordination point for ATP; that stretch reads GANGIGKS.

This sequence belongs to the ABC transporter superfamily. CcmA exporter (TC 3.A.1.107) family. The complex is composed of two ATP-binding proteins (CcmA) and two transmembrane proteins (CcmB).

It is found in the cell inner membrane. It carries out the reaction heme b(in) + ATP + H2O = heme b(out) + ADP + phosphate + H(+). Functionally, part of the ABC transporter complex CcmAB involved in the biogenesis of c-type cytochromes; once thought to export heme, this seems not to be the case, but its exact role is uncertain. Responsible for energy coupling to the transport system. This Novosphingobium aromaticivorans (strain ATCC 700278 / DSM 12444 / CCUG 56034 / CIP 105152 / NBRC 16084 / F199) protein is Cytochrome c biogenesis ATP-binding export protein CcmA.